Consider the following 847-residue polypeptide: Glucans biosynthesis glucosyltransferase H (847 aa).

The Cytoplasmic segment spans residues 1–138; that stretch reads MNKTTEYIDA…KWRTVGTIRR (138 aa). A helical transmembrane segment spans residues 139-156; it reads YILLILTLAQTVVATWYM. Residues 157-193 are Periplasmic-facing; sequence KTILPYQGWALINPMDMVGQDVWVSFMQLLPYMLQTG. The chain crosses the membrane as a helical span at residues 194 to 216; sequence ILILFAVLFCWVSAGFWTALMGF. Over 217-511 the chain is Cytoplasmic; that stretch reads LQLLIGRDKY…LVKGMHPVHR (295 aa). Residues 512–534 form a helical membrane-spanning segment; the sequence is AVFLTGVMSYLSAPLWFMFLALS. Over 535–567 the chain is Periplasmic; it reads TALQVVHALTEPQYFLQPRQLFPVWPQWRPELA. The helical transmembrane segment at 568-590 threads the bilayer; sequence IALFASTMVLLFLPKLLSILLIW. Residues 591-602 lie on the Cytoplasmic side of the membrane; sequence CKGTKEYGGFWR. A helical membrane pass occupies residues 603–625; that stretch reads VTLSLLLEVLFSVLLAPVRMLFH. Residues 626-679 are Periplasmic-facing; it reads TVFVVSAFLGWEVVWNSPQRDDDSTSWGEAFKRHGSQLLLGLVWAVGMAWLDLR. A helical transmembrane segment spans residues 680–702; the sequence is FLFWLAPIVFSLILSPFVSVISS. The Cytoplasmic portion of the chain corresponds to 703 to 847; sequence RATVGLRTKR…ALRKPDAASQ (145 aa).

This sequence belongs to the glycosyltransferase 2 family. OpgH subfamily.

Its subcellular location is the cell inner membrane. It participates in glycan metabolism; osmoregulated periplasmic glucan (OPG) biosynthesis. In terms of biological role, involved in the biosynthesis of osmoregulated periplasmic glucans (OPGs). The protein is Glucans biosynthesis glucosyltransferase H of Escherichia coli O6:H1 (strain CFT073 / ATCC 700928 / UPEC).